We begin with the raw amino-acid sequence, 84 residues long: uncharacterized protein (84 aa).

This is an uncharacterized protein from Acidianus convivator (ATV).